The primary structure comprises 953 residues: Coatomer subunit beta-1 (953 aa).

5 HEAT repeats span residues 49–87, 93–127, 128–165, 314–351, and 393–430; these read ETLP…RDVA, PEMI…LNEP, ELLE…LPHG, DVMV…PRNV, and EVAG…TNPK.

As to quaternary structure, oligomeric complex that consists of at least the alpha, beta, beta', gamma, delta, epsilon and zeta subunits.

It localises to the cytoplasm. It is found in the golgi apparatus membrane. The protein localises to the cytoplasmic vesicle. Its subcellular location is the COPI-coated vesicle membrane. Functionally, the coatomer is a cytosolic protein complex that binds to dilysine motifs and reversibly associates with Golgi non-clathrin-coated vesicles, which further mediate biosynthetic protein transport from the ER, via the Golgi up to the trans Golgi network. Coatomer complex is required for budding from Golgi membranes, and is essential for the retrograde Golgi-to-ER transport of dilysine-tagged proteins. This Oryza sativa subsp. japonica (Rice) protein is Coatomer subunit beta-1.